The chain runs to 823 residues: Trimethylamine-N-oxide reductase (823 aa).

Residues 1 to 32 (MKQSRRQFLKNMSAMAATFAMPNFLIAQNAFA) constitute a signal peptide (tat-type signal). A Mo-bis(molybdopterin guanine dinucleotide)-binding site is contributed by Ser181.

The protein belongs to the prokaryotic molybdopterin-containing oxidoreductase family. Mo-bis(molybdopterin guanine dinucleotide) serves as cofactor. Post-translationally, predicted to be exported by the Tat system. The position of the signal peptide cleavage has not been experimentally proven.

The protein localises to the periplasm. It carries out the reaction trimethylamine + 2 Fe(III)-[cytochrome c] + H2O = trimethylamine N-oxide + 2 Fe(II)-[cytochrome c] + 3 H(+). Its function is as follows. Reduces trimethylamine-N-oxide (TMAO) into trimethylamine; an anaerobic reaction coupled to energy-yielding reactions. This is Trimethylamine-N-oxide reductase (torA) from Pasteurella multocida (strain Pm70).